The primary structure comprises 130 residues: Small ribosomal subunit protein uS11 (130 aa).

It belongs to the universal ribosomal protein uS11 family. As to quaternary structure, part of the 30S ribosomal subunit. Interacts with proteins S7 and S18. Binds to IF-3.

In terms of biological role, located on the platform of the 30S subunit, it bridges several disparate RNA helices of the 16S rRNA. Forms part of the Shine-Dalgarno cleft in the 70S ribosome. The polypeptide is Small ribosomal subunit protein uS11 (Microcystis aeruginosa (strain NIES-843 / IAM M-2473)).